The chain runs to 429 residues: MLDIRALRQDGEAIKAALSKRGYTLDLEEFAALDAKRKQADMRSQELQADRKKASKQVGELIKSGMAVDEAKAQVADALQTIDTELDKEVASAKAIQDEIREYLMGIPNVPQEAVPAGNDEDDNVEVRRWGTPKTLPFEPKDHVDIGEALEGGLDFERAAKLSGARFAVMSGGLARMHRALIDFMLDIHSDEHGYQEVYVPFLVGPEALRGTGQLPKFAEDLFKIEGERELYLIPTAEVPVTNLAADEILEANTMPRRYTCHTPCFRSEAGSHGRDTRGMIRQHQFEKVELVQMVRPEESDAALEALTGHAEAILQKLDLPYRVVILCGGDLGFSSSKTYDIEVWLPSQQCYREISSCSNFRDYQSRRMQARWRNPETGKPELVHTLNGSALAVGRTLVAILENYQNDDGSVTVPEALRPYMRGLERLK.

Residue 236–238 (TAE) coordinates L-serine. 267–269 (RSE) lines the ATP pocket. Glu-290 is a binding site for L-serine. An ATP-binding site is contributed by 354-357 (EISS). Ser-390 is an L-serine binding site.

Belongs to the class-II aminoacyl-tRNA synthetase family. Type-1 seryl-tRNA synthetase subfamily. Homodimer. The tRNA molecule binds across the dimer.

Its subcellular location is the cytoplasm. It catalyses the reaction tRNA(Ser) + L-serine + ATP = L-seryl-tRNA(Ser) + AMP + diphosphate + H(+). The enzyme catalyses tRNA(Sec) + L-serine + ATP = L-seryl-tRNA(Sec) + AMP + diphosphate + H(+). The protein operates within aminoacyl-tRNA biosynthesis; selenocysteinyl-tRNA(Sec) biosynthesis; L-seryl-tRNA(Sec) from L-serine and tRNA(Sec): step 1/1. Catalyzes the attachment of serine to tRNA(Ser). Is also able to aminoacylate tRNA(Sec) with serine, to form the misacylated tRNA L-seryl-tRNA(Sec), which will be further converted into selenocysteinyl-tRNA(Sec). This Alcanivorax borkumensis (strain ATCC 700651 / DSM 11573 / NCIMB 13689 / SK2) protein is Serine--tRNA ligase.